A 545-amino-acid polypeptide reads, in one-letter code: CTP synthase (545 aa).

Residues 1-266 form an amidoligase domain region; that stretch reads MTTRYIFVTG…DDLVVKRFGL (266 aa). Position 14 (Ser-14) interacts with CTP. Ser-14 contributes to the UTP binding site. ATP is bound by residues 15-20 and Asp-72; that span reads SLGKGI. Residues Asp-72 and Glu-140 each contribute to the Mg(2+) site. CTP-binding positions include 147 to 149, 187 to 192, and Lys-223; these read DIE and KTKPTQ. Residues 187-192 and Lys-223 contribute to the UTP site; that span reads KTKPTQ. Residue 239–241 participates in ATP binding; it reads KDV. The 252-residue stretch at 291–542 folds into the Glutamine amidotransferase type-1 domain; that stretch reads VIGMVGKYIE…IAAASAHQKR (252 aa). Gly-352 contributes to the L-glutamine binding site. The Nucleophile; for glutamine hydrolysis role is filled by Cys-379. Residues 380-383, Glu-403, and Arg-470 contribute to the L-glutamine site; that span reads LGMQ. Residues His-515 and Glu-517 contribute to the active site.

Belongs to the CTP synthase family. As to quaternary structure, homotetramer.

The catalysed reaction is UTP + L-glutamine + ATP + H2O = CTP + L-glutamate + ADP + phosphate + 2 H(+). It carries out the reaction L-glutamine + H2O = L-glutamate + NH4(+). It catalyses the reaction UTP + NH4(+) + ATP = CTP + ADP + phosphate + 2 H(+). It participates in pyrimidine metabolism; CTP biosynthesis via de novo pathway; CTP from UDP: step 2/2. Its activity is regulated as follows. Allosterically activated by GTP, when glutamine is the substrate; GTP has no effect on the reaction when ammonia is the substrate. The allosteric effector GTP functions by stabilizing the protein conformation that binds the tetrahedral intermediate(s) formed during glutamine hydrolysis. Inhibited by the product CTP, via allosteric rather than competitive inhibition. Its function is as follows. Catalyzes the ATP-dependent amination of UTP to CTP with either L-glutamine or ammonia as the source of nitrogen. Regulates intracellular CTP levels through interactions with the four ribonucleotide triphosphates. The chain is CTP synthase from Shewanella baltica (strain OS155 / ATCC BAA-1091).